The sequence spans 446 residues: tRNA-2-methylthio-N(6)-dimethylallyladenosine synthase (446 aa).

The MTTase N-terminal domain maps to 3 to 120 (QKLFIKTYGC…LPEMVNSVAH (118 aa)). Residues cysteine 12, cysteine 49, cysteine 83, cysteine 157, cysteine 161, and cysteine 164 each contribute to the [4Fe-4S] cluster site. The Radical SAM core domain maps to 143–375 (SSEGASAFVS…QQRILQFAQD (233 aa)). Positions 378 to 442 (RKMVGSTQRI…PNSLRGERVD (65 aa)) constitute a TRAM domain.

Belongs to the methylthiotransferase family. MiaB subfamily. Monomer. The cofactor is [4Fe-4S] cluster.

Its subcellular location is the cytoplasm. It catalyses the reaction N(6)-dimethylallyladenosine(37) in tRNA + (sulfur carrier)-SH + AH2 + 2 S-adenosyl-L-methionine = 2-methylsulfanyl-N(6)-dimethylallyladenosine(37) in tRNA + (sulfur carrier)-H + 5'-deoxyadenosine + L-methionine + A + S-adenosyl-L-homocysteine + 2 H(+). Functionally, catalyzes the methylthiolation of N6-(dimethylallyl)adenosine (i(6)A), leading to the formation of 2-methylthio-N6-(dimethylallyl)adenosine (ms(2)i(6)A) at position 37 in tRNAs that read codons beginning with uridine. The chain is tRNA-2-methylthio-N(6)-dimethylallyladenosine synthase from Hahella chejuensis (strain KCTC 2396).